Consider the following 768-residue polypeptide: P-selectin (768 aa).

An N-terminal signal peptide occupies residues 1-41; the sequence is MAGCPKGSWKPRLRSVVLGAAQLIWLSALISELVNRKKVAT. Over 42–709 the chain is Extracellular; that stretch reads WTYNYSTKAY…QAGTLTIQEA (668 aa). N-linked (GlcNAc...) asparagine glycosylation is found at asparagine 45, asparagine 54, and asparagine 107. A C-type lectin domain is found at 58 to 158; that stretch reads AFCKRHFTDL…PCFKRKRALC (101 aa). 20 cysteine pairs are disulfide-bonded: cysteine 60–cysteine 158, cysteine 131–cysteine 150, cysteine 168–cysteine 183, cysteine 185–cysteine 194, cysteine 200–cysteine 244, cysteine 230–cysteine 257, cysteine 262–cysteine 306, cysteine 292–cysteine 319, cysteine 324–cysteine 368, cysteine 354–cysteine 381, cysteine 386–cysteine 430, cysteine 416–cysteine 443, cysteine 448–cysteine 492, cysteine 478–cysteine 505, cysteine 510–cysteine 554, cysteine 540–cysteine 567, cysteine 580–cysteine 624, cysteine 610–cysteine 637, cysteine 642–cysteine 686, and cysteine 672–cysteine 699. Ca(2+) contacts are provided by glutamate 121, asparagine 123, and asparagine 124. Position 123 (asparagine 123) interacts with a carbohydrate. The a carbohydrate site is built by glutamate 133 and asparagine 146. 2 residues coordinate Ca(2+): asparagine 146 and aspartate 147. Positions 159–195 constitute an EGF-like domain; sequence YTASCQDMSCNSQGERIETIGSYTCSCYPGFYGPECE. 8 Sushi domains span residues 198-259, 260-321, 322-383, 384-445, 446-507, 508-569, 578-639, and 640-701; these read QECG…QCKA, VQCQ…TCEA, IACE…VCEA, LQCQ…ECQA, VSCT…MCEA, IKCP…TCKG, VRCP…VCRA, and VKCS…TCQA. The N-linked (GlcNAc...) asparagine glycan is linked to asparagine 212. N-linked (GlcNAc...) asparagine glycosylation is present at asparagine 347. Residue asparagine 456 is glycosylated (N-linked (GlcNAc...) asparagine). N-linked (GlcNAc...) asparagine glycosylation is present at asparagine 603. Residues asparagine 654, asparagine 661, and asparagine 679 are each glycosylated (N-linked (GlcNAc...) asparagine). Residues 710–733 traverse the membrane as a helical segment; the sequence is LTYLGGALASTSGLAVGGTLLALL. The Cytoplasmic portion of the chain corresponds to 734 to 768; that stretch reads RKRLRKKDDGKCPLNPHSHLGTYGVFTNAAYDPTP. Cysteine 745 carries S-palmitoyl cysteine; alternate lipidation. Cysteine 745 is lipidated: S-stearoyl cysteine; alternate. Positions 756-759 match the Endocytosis signal motif; sequence YGVF. An interaction with SNX17 region spans residues 759–768; sequence FTNAAYDPTP.

The protein belongs to the selectin/LECAM family. Interacts with SNX17. Interacts with SELPLG/PSGL1 and PODXL2 and mediates neutrophil adhesion and leukocyte rolling. This interaction requires the sialyl-Lewis X epitope of SELPLG and PODXL2, and specific tyrosine sulfation on SELPLG. Interacts (via C-type lectin domain) with alpha-IIb/beta3 integrin ITGA2B:ITGB3 and alpha-V/beta-3 integrin ITGAV:ITGB3. Interacts with alpha5/beta1 integrin ITGA5:ITGB1 and alpha4/beta1 integrin ITGA4:ITGB. In terms of tissue distribution, not detected in the absence of exposure to lipopolysaccharide (LPS). Detected only after exposure to lipopolysaccharide (LPS) in the tissues examined: spleen, lung, brain, liver, heart, kidney, thymus and small intestine.

The protein localises to the cell membrane. Functionally, ca(2+)-dependent receptor for myeloid cells that binds to carbohydrates on neutrophils and monocytes. Mediates the interaction of activated endothelial cells or platelets with leukocytes. The ligand recognized is sialyl-Lewis X. Mediates rapid rolling of leukocyte rolling over vascular surfaces during the initial steps in inflammation through interaction with SELPLG. Mediates cell-cell interactions and cell adhesion via the interaction with integrin alpha-IIb/beta3 (ITGA2B:ITGB3) and integrin alpha-V/beta-3 (ITGAV:ITGB3). In Rattus norvegicus (Rat), this protein is P-selectin (Selp).